We begin with the raw amino-acid sequence, 440 residues long: Trigger factor (440 aa).

Residues 163–248 (GDTVVIDFKG…VHEVKTKELP (86 aa)) enclose the PPIase FKBP-type domain.

This sequence belongs to the FKBP-type PPIase family. Tig subfamily.

It is found in the cytoplasm. The catalysed reaction is [protein]-peptidylproline (omega=180) = [protein]-peptidylproline (omega=0). Functionally, involved in protein export. Acts as a chaperone by maintaining the newly synthesized protein in an open conformation. Functions as a peptidyl-prolyl cis-trans isomerase. The sequence is that of Trigger factor from Lactiplantibacillus plantarum (strain ATCC BAA-793 / NCIMB 8826 / WCFS1) (Lactobacillus plantarum).